The sequence spans 620 residues: Proline--tRNA ligase (620 aa).

Belongs to the class-II aminoacyl-tRNA synthetase family. ProS type 1 subfamily. As to quaternary structure, homodimer.

It is found in the cytoplasm. It catalyses the reaction tRNA(Pro) + L-proline + ATP = L-prolyl-tRNA(Pro) + AMP + diphosphate. In terms of biological role, catalyzes the attachment of proline to tRNA(Pro) in a two-step reaction: proline is first activated by ATP to form Pro-AMP and then transferred to the acceptor end of tRNA(Pro). As ProRS can inadvertently accommodate and process non-cognate amino acids such as alanine and cysteine, to avoid such errors it has two additional distinct editing activities against alanine. One activity is designated as 'pretransfer' editing and involves the tRNA(Pro)-independent hydrolysis of activated Ala-AMP. The other activity is designated 'posttransfer' editing and involves deacylation of mischarged Ala-tRNA(Pro). The misacylated Cys-tRNA(Pro) is not edited by ProRS. This chain is Proline--tRNA ligase, found in Streptococcus suis (strain 98HAH33).